We begin with the raw amino-acid sequence, 395 residues long: Putative 8-amino-7-oxononanoate synthase (395 aa).

Arg22 serves as a coordination point for substrate. Residue 109-110 (GY) participates in pyridoxal 5'-phosphate binding. Residue His139 participates in substrate binding. Pyridoxal 5'-phosphate-binding positions include Ser187, 212–215 (DEAH), and 241–244 (TFSK). An N6-(pyridoxal phosphate)lysine modification is found at Lys244. Thr358 contributes to the substrate binding site.

Belongs to the class-II pyridoxal-phosphate-dependent aminotransferase family. BioF subfamily. Homodimer. The cofactor is pyridoxal 5'-phosphate.

The enzyme catalyses 6-carboxyhexanoyl-[ACP] + L-alanine + H(+) = (8S)-8-amino-7-oxononanoate + holo-[ACP] + CO2. It participates in cofactor biosynthesis; biotin biosynthesis. Its function is as follows. Catalyzes the decarboxylative condensation of pimeloyl-[acyl-carrier protein] and L-alanine to produce 8-amino-7-oxononanoate (AON), [acyl-carrier protein], and carbon dioxide. This Magnetococcus marinus (strain ATCC BAA-1437 / JCM 17883 / MC-1) protein is Putative 8-amino-7-oxononanoate synthase (bioF).